The sequence spans 168 residues: Ribosome maturation factor RimM (168 aa).

Residues 96–168 (VDEYYWGDLI…TIRVDWQKDW (73 aa)) enclose the PRC barrel domain.

It belongs to the RimM family. In terms of assembly, binds ribosomal protein uS19.

The protein localises to the cytoplasm. Its function is as follows. An accessory protein needed during the final step in the assembly of 30S ribosomal subunit, possibly for assembly of the head region. Essential for efficient processing of 16S rRNA. May be needed both before and after RbfA during the maturation of 16S rRNA. It has affinity for free ribosomal 30S subunits but not for 70S ribosomes. The sequence is that of Ribosome maturation factor RimM from Aromatoleum aromaticum (strain DSM 19018 / LMG 30748 / EbN1) (Azoarcus sp. (strain EbN1)).